The chain runs to 114 residues: Iron-sulfur cluster insertion protein ErpA (114 aa).

Positions 42, 106, and 108 each coordinate iron-sulfur cluster.

This sequence belongs to the HesB/IscA family. Homodimer. It depends on iron-sulfur cluster as a cofactor.

Functionally, required for insertion of 4Fe-4S clusters for at least IspG. The protein is Iron-sulfur cluster insertion protein ErpA of Citrobacter koseri (strain ATCC BAA-895 / CDC 4225-83 / SGSC4696).